A 354-amino-acid polypeptide reads, in one-letter code: Interferon-inducible protein AIM2 (354 aa).

In terms of domain architecture, Pyrin spans M1–E87. Residues N95–D124 are disordered. Over residues Q109–R120 the composition is skewed to polar residues. Residues M144 to I341 enclose the HIN-200 domain.

This sequence belongs to the HIN-200 family. Self-associates; forms homooligomers in response to cytosolic double-stranded DNA (dsDNA) and the dsDNA seems to serve as oligomerization platform. Component of AIM2 inflammasome, which consists of a signal sensor component (AIM2), an adapter (PYCARD/ASC), which recruits an effector pro-inflammatory caspase (CASP1). Interacts (via pyrin domain) with PYCARD/ASC (via pyrin domain); interaction is direct. Component of the AIM2 PANoptosome complex, a multiprotein complex that drives inflammatory cell death (PANoptosis). Interacts with EIF2AK2/PKR. Interacts with MAPRE1. Interacts (via HIN-200 domain) with IFI202 (via HIN-200 domain 2); preventing activation of the AIM2 inflammasome. Interacts with RACK1; promoting association with PP2A phosphatase and dephosphorylation of AKT1. Interacts with TRIM11; promoting AIM2 recruitment to autophagosomes and autophagy-dependent degradation. In terms of processing, degraded via selective autophagy following interaction with TRIM11. As to expression, expressed in developing neurons. Highly expressed in regulatory T-cells (Treg).

The protein resides in the cytoplasm. It localises to the inflammasome. The protein localises to the nucleus. Inactive in absence of double-stranded DNA (dsDNA). Homooligomerizes upon binding to dsDNA, dsDNA serving as an oligomerization platform. AIM2 requires large dsDNA to generate a structural template that couples dsDNA ligand-binding and homooligomerization. Homooligomerization is followed by recruitment of PYCARD/ASC to initiate speck formation (nucleation). AIM2 and PYCARD/ASC homooligomer filaments assemble bidirectionally and the recognition between AIM2 and PYCARD/ASC oligomers occurs in a head-to-tail manner. Clustered PYCARD/ASC nucleates the formation of CASP1 filaments through the interaction of their respective CARD domains, acting as a platform for CASP1 polymerization and activation. Active CASP1 then specifically processes protein precursors, such as gasdermin-D (GSDMD), IL1B and IL18, leading to the release of mature cytokines in the extracellular milieu or pyroptosis, depending on cell type. AIM2 can be activated in response to events that cause genomic DNA (HIV protease inhibitor nelfinavir) or mitochondrial DNA release in the cytoplasm (such as Perfluoroalkyl substance pollutants or cholesterol overload). Activation of the AIM2 inflammasome is inhibited by IFI202. Activation of the AIM2 inflammasome is inhibited by TRIM11, which promotes autophagy-dependent degradation of AIM2. Its function is as follows. Sensor component of the AIM2 inflammasome, which mediates inflammasome activation in response to the presence of double-stranded DNA (dsDNA) in the cytosol, leading to subsequent pyroptosis. Inflammasomes are supramolecular complexes that assemble in the cytosol in response to pathogens and other damage-associated signals and play critical roles in innate immunity and inflammation. Acts as a recognition receptor (PRR): specifically recognizes and binds dsDNA in the cytosol, and mediates the formation of the inflammasome polymeric complex composed of AIM2, CASP1 and PYCARD/ASC. Recruitment of pro-caspase-1 (proCASP1) to the AIM2 inflammasome promotes caspase-1 (CASP1) activation, which subsequently cleaves and activates inflammatory cytokines IL1B and IL18 and gasdermin-D (GSDMD), promoting cytokine secretion. In some cells, CASP1 activation mediates cleavage and activation of GSDMD, triggering pyroptosis without promoting cytokine secretion. Detects cytosolic dsDNA of viral and bacterial origin in a non-sequence-specific manner. Involved in the DNA damage response caused by acute ionizing radiation by mediating pyroptosis of intestinal epithelial cells and bone marrow cells in response to double-strand DNA breaks. Mechanistically, AIM2 senses DNA damage in the nucleus to mediate inflammasome assembly and inflammatory cell death. Also acts as a regulator of neurodevelopment via its role in the DNA damage response: acts by promoting neural cell death in response to DNA damage in the developing brain, thereby purging genetically compromised cells of the central nervous system. Pyroptosis mediated by the AIM2 inflammasome in response to DNA damage is dependent on GSDMD without involving IL1B and IL18 cytokine secretion. Also acts as a mediator of pyroptosis, necroptosis and apoptosis (PANoptosis), an integral part of host defense against pathogens, in response to bacterial infection. Can also trigger PYCARD/ASC-dependent, caspase-1-independent cell death that involves caspase-8 (CASP8). Also acts as a tumor suppressor independently of its role in inflammatory response. Able to suppress overt cell proliferation in enterocytes: restricts stem cell proliferation in the intestinal mucosa in an inflammasome-independent manner, contributing to a decrease in the likelihood of colorectal cancer development. AIM2 suppresses cell proliferation by inhibiting phosphorylation of AKT1 at 'Ser-473', preventing AKT1 activation and AKT-mTOR signaling pathway. Inhibits AKT1 phosphorylation both by inhibiting the activity of PRKDC/DNA-PK kinase and promoting dephosphorylation by PP2A phosphatase. Also acts as a key regulator of regulatory T-cells (Treg) homeostasis by promoting their stability: acts by preventing AKT1 activation. Its role in Treg homeostasis is important to restain autoimmune diseases. The protein is Interferon-inducible protein AIM2 of Mus musculus (Mouse).